The following is a 288-amino-acid chain: Orotidine 5'-phosphate decarboxylase (288 aa).

Residue Lys-99 is the Proton donor of the active site.

The protein belongs to the OMP decarboxylase family. Type 2 subfamily.

It catalyses the reaction orotidine 5'-phosphate + H(+) = UMP + CO2. It functions in the pathway pyrimidine metabolism; UMP biosynthesis via de novo pathway; UMP from orotate: step 2/2. The sequence is that of Orotidine 5'-phosphate decarboxylase (pyrF) from Myxococcus xanthus (strain DK1622).